The primary structure comprises 495 residues: MALQQHEPAPFAPQSSLSFTQGFLLGQLSVVLLIGAFIKFFIFGEAPPPPSRGMSNRTTHRRYSSVYSPPQDSQKSLREKPSTSNVLRPVPSTSTNTRSILRKTYYSAIPTNPTSKHGRHRMHHSSHQPESLDWFNVLIAQTIAQYRETAYSLKDSPTSSILSSLTAAMNNPEKKPSFIDKIKVTDISLGEEFPIFSNCRIIAVDDPVSDGGRLQALLDVDLSDDNLSIAVETSMLLNYPKPRSAIIPIALSVSVVRFSGTLCISLIPASTEPPEPLQTPAGSPAPPTSDPRDNAGNRPPGPGEHTASQDELPPKSSPKSNVAFSFLPDYRLDLSVRSLIGSRSRLQDVPKIAQLVEARVHAWFEERVVEPRVQVVGLPDLWPRMGRTGVRPGEDSDAGSTAPPRSAGSTESSGPPRFSDDHGREPEGLRFRGALDSRLGLGAGSRTNSFNVDMGGLRSSSMTRQQSGGARSDHFEMPGAMPAGTPVGTPGIPDN.

Over 1 to 22 (MALQQHEPAPFAPQSSLSFTQG) the chain is Lumenal. A helical transmembrane segment spans residues 23–43 (FLLGQLSVVLLIGAFIKFFIF). Over 44 to 495 (GEAPPPPSRG…PVGTPGIPDN (452 aa)) the chain is Cytoplasmic. 4 disordered regions span residues 63-94 (YSSV…PSTS), 269-320 (ASTE…SPKS), 382-428 (WPRM…EPEG), and 440-495 (GLGA…IPDN). Polar residues-rich tracts occupy residues 65–74 (SVYSPPQDSQ) and 82–94 (STSN…PSTS). Residues 128 to 379 (QPESLDWFNV…EPRVQVVGLP (252 aa)) form the SMP-LTD domain. Over residues 271–289 (TEPPEPLQTPAGSPAPPTS) the composition is skewed to pro residues. Basic and acidic residues predominate over residues 418–428 (FSDDHGREPEG). The segment covering 458-469 (RSSSMTRQQSGG) has biased composition (polar residues).

The protein belongs to the MMM1 family. Homodimer. Component of the ER-mitochondria encounter structure (ERMES) or MDM complex, composed of mmm1, mdm10, mdm12 and mdm34. An MMM1 homodimer associates with one molecule of mdm12 on each side in a pairwise head-to-tail manner, and the SMP-LTD domains of mmm1 and mdm12 generate a continuous hydrophobic tunnel for phospholipid trafficking.

Its subcellular location is the endoplasmic reticulum membrane. Its function is as follows. Component of the ERMES/MDM complex, which serves as a molecular tether to connect the endoplasmic reticulum (ER) and mitochondria. Components of this complex are involved in the control of mitochondrial shape and protein biogenesis, and function in nonvesicular lipid trafficking between the ER and mitochondria. The mdm12-mmm1 subcomplex functions in the major beta-barrel assembly pathway that is responsible for biogenesis of all outer membrane beta-barrel proteins, and acts in a late step after the SAM complex. The mdm10-mdm12-mmm1 subcomplex further acts in the TOM40-specific pathway after the action of the mdm12-mmm1 complex. Essential for establishing and maintaining the structure of mitochondria and maintenance of mtDNA nucleoids. In Penicillium rubens (strain ATCC 28089 / DSM 1075 / NRRL 1951 / Wisconsin 54-1255) (Penicillium chrysogenum), this protein is Maintenance of mitochondrial morphology protein 1.